The chain runs to 353 residues: Rhodopsin (353 aa).

At 1–36 the chain is on the extracellular side; it reads MNGTEGPFFYVPMLNTTGIVRSPYDYPQYYLVNPAA. Asparagine 2 and asparagine 15 each carry an N-linked (GlcNAc...) asparagine glycan. Residues 37–61 traverse the membrane as a helical segment; sequence YAALGAYMFLLILLGFPINFLTLYV. Topologically, residues 62 to 73 are cytoplasmic; sequence TIEHKKLRTPLN. A helical transmembrane segment spans residues 74–96; sequence YILLNLAVANLFMVFGGFTTTMY. The Extracellular portion of the chain corresponds to 97–110; that stretch reads TSMHGYFVLGRLGC. A disulfide bridge connects residues cysteine 110 and cysteine 187. A helical transmembrane segment spans residues 111–133; that stretch reads NLEGFFATLGGEIGLWSLVVLAI. The 'Ionic lock' involved in activated form stabilization motif lies at 134–136; sequence ERW. At 134 to 152 the chain is on the cytoplasmic side; the sequence is ERWMVVCKPISNFRFGENH. A helical membrane pass occupies residues 153-173; that stretch reads AIMGLAFTWIMACACAVPPLV. Residues 174–202 lie on the Extracellular side of the membrane; that stretch reads GWSRYIPEGMQCSCGVDYYTRAEGFNNES. An N-linked (GlcNAc...) asparagine glycan is attached at asparagine 200. A helical membrane pass occupies residues 203 to 224; sequence FVVYMFICHFLIPMAVVFFCYG. Over 225-252 the chain is Cytoplasmic; the sequence is RLLCAVKEAAAAQQESETTQRAEREVTR. The chain crosses the membrane as a helical span at residues 253–274; that stretch reads MVVIMVVAFLICWLPYAGVAWW. Topologically, residues 275 to 286 are extracellular; the sequence is IFTHQGSEFGPV. The chain crosses the membrane as a helical span at residues 287–308; the sequence is FMTIPAFFAKSSSIYNPLIYIC. Lysine 296 bears the N6-(retinylidene)lysine mark. The Cytoplasmic segment spans residues 309–353; the sequence is MNKQFRHCMITTLCCGKNPFEEEEGASTTSKTEASSVSSSSVSPA. 2 S-palmitoyl cysteine lipidation sites follow: cysteine 322 and cysteine 323. The tract at residues 330–353 is disordered; sequence EEEGASTTSKTEASSVSSSSVSPA. Residues 334-353 show a composition bias toward low complexity; it reads ASTTSKTEASSVSSSSVSPA.

The protein belongs to the G-protein coupled receptor 1 family. Opsin subfamily. In terms of processing, phosphorylated on some or all of the serine and threonine residues present in the C-terminal region. Contains one covalently linked retinal chromophore.

It localises to the membrane. It is found in the cell projection. The protein resides in the cilium. Its subcellular location is the photoreceptor outer segment. Its function is as follows. Photoreceptor required for image-forming vision at low light intensity. While most salt water fish species use retinal as chromophore, most freshwater fish use 3-dehydroretinal, or a mixture of retinal and 3-dehydroretinal. Light-induced isomerization of 11-cis to all-trans retinal triggers a conformational change that activates signaling via G-proteins. Subsequent receptor phosphorylation mediates displacement of the bound G-protein alpha subunit by arrestin and terminates signaling. The sequence is that of Rhodopsin (rho) from Tetraodon nigroviridis (Spotted green pufferfish).